A 304-amino-acid chain; its full sequence is Mas-related G-protein coupled receptor member A (304 aa).

Topologically, residues 1–17 (MDKTIPGSFNSRTLIPN) are extracellular. The chain crosses the membrane as a helical span at residues 18–38 (LLIIISGLVGLIGNAMVFWLL). At 39 to 46 (GFRLARNA) the chain is on the cytoplasmic side. Residues 47–67 (FSVYILNLALADFLFLLCHII) form a helical membrane-spanning segment. At 68 to 80 (DSTLLLLKFSYPN) the chain is on the extracellular side. A helical transmembrane segment spans residues 81 to 101 (IIFLPCFNTVMMVPYIAGLSM). Residues 102 to 132 (LSAISTERCLSVVCPIWYRCRRPKHTSTVMC) are Cytoplasmic-facing. A helical membrane pass occupies residues 133 to 153 (SAIWVLSLLICILNRYFCGFL). Over 154–167 (DTKYEKDNRCLASN) the chain is Extracellular. A helical transmembrane segment spans residues 168–188 (FFTAACLIFLFVVLCLSSLAL). Residues 189–211 (LVRLFCGAGRMKLTRLYATIMLT) are Cytoplasmic-facing. Residues 212–232 (VLVFLLCGLPFGIHWFLLIWI) traverse the membrane as a helical segment. The Extracellular portion of the chain corresponds to 233–244 (KIDYGKFAYGLY). Residues 245 to 265 (LAALVLTAVNSCANPIIYFFV) form a helical membrane-spanning segment. Residues 266 to 304 (GSFRHQKHQTLKMVLQRALQDTPETAENTVEMSSSKVEP) lie on the Cytoplasmic side of the membrane.

This sequence belongs to the G-protein coupled receptor 1 family. Mas subfamily. Expressed in a subset of IB4-positive small diameter nociceptive dorsal root neurons.

It localises to the cell membrane. Its function is as follows. Orphan receptor activated by a subset of RFamide-family neuropeptides such as FLRF-amide and FMRF-amide. Mediates its action by association with G proteins that activate a phosphatidylinositol-calcium second messenger system. Its effect is mediated by G(q) and G(11) proteins. May regulate the function of nociceptive neurons by modulation of pain perception. In Rattus norvegicus (Rat), this protein is Mas-related G-protein coupled receptor member A (Mrgpra).